Reading from the N-terminus, the 340-residue chain is UPF0324 membrane protein BA_5405/GBAA_5405/BAS5024 (340 aa).

10 helical membrane-spanning segments follow: residues 13-35 (FGFSQGIGITLLIAIVAKYLAEL), 40-59 (IMGQLVIAILIGMVWRAAIG), 99-118 (VLVIAAVVITFTLFVVYGLT), 128-150 (GILTACGTAICGAAAVVAIAPQV), 157-179 (TAVGAAIIAILGTIFTLIYTLLY), 189-211 (YGVFSGATLHEIAHVIAAAAPGG), 218-240 (AVIVKLTRVTMLVPVAILIGVWF), 255-277 (LPIPWFIFGFLAMSAVHSLGIIP), 279-301 (VVAGYIVVLAYMLIAMAMAGLGL), and 316-338 (FVAGLIGSVCLSVLGYVLVYALG).

The protein belongs to the UPF0324 family.

Its subcellular location is the cell membrane. The protein is UPF0324 membrane protein BA_5405/GBAA_5405/BAS5024 of Bacillus anthracis.